The chain runs to 127 residues: Aspartate 1-decarboxylase (127 aa).

Serine 25 serves as the catalytic Schiff-base intermediate with substrate; via pyruvic acid. Serine 25 carries the pyruvic acid (Ser) modification. Residue threonine 57 participates in substrate binding. Residue tyrosine 58 is the Proton donor of the active site. 73 to 75 (GAA) is a substrate binding site.

It belongs to the PanD family. In terms of assembly, heterooctamer of four alpha and four beta subunits. Requires pyruvate as cofactor. In terms of processing, is synthesized initially as an inactive proenzyme, which is activated by self-cleavage at a specific serine bond to produce a beta-subunit with a hydroxyl group at its C-terminus and an alpha-subunit with a pyruvoyl group at its N-terminus.

It is found in the cytoplasm. It carries out the reaction L-aspartate + H(+) = beta-alanine + CO2. It participates in cofactor biosynthesis; (R)-pantothenate biosynthesis; beta-alanine from L-aspartate: step 1/1. Its function is as follows. Catalyzes the pyruvoyl-dependent decarboxylation of aspartate to produce beta-alanine. The sequence is that of Aspartate 1-decarboxylase from Listeria monocytogenes serovar 1/2a (strain ATCC BAA-679 / EGD-e).